Here is a 350-residue protein sequence, read N- to C-terminus: tRNA uridine(34) hydroxylase (350 aa).

A Rhodanese domain is found at 146 to 240 (DDPDALFIDM…YARKAREQGL (95 aa)). Cysteine 200 (cysteine persulfide intermediate) is an active-site residue.

It belongs to the TrhO family.

It carries out the reaction uridine(34) in tRNA + AH2 + O2 = 5-hydroxyuridine(34) in tRNA + A + H2O. Functionally, catalyzes oxygen-dependent 5-hydroxyuridine (ho5U) modification at position 34 in tRNAs. This is tRNA uridine(34) hydroxylase from Escherichia fergusonii (strain ATCC 35469 / DSM 13698 / CCUG 18766 / IAM 14443 / JCM 21226 / LMG 7866 / NBRC 102419 / NCTC 12128 / CDC 0568-73).